We begin with the raw amino-acid sequence, 200 residues long: Holliday junction branch migration complex subunit RuvA (200 aa).

A domain I region spans residues 1–63; it reads MIALVQGRVA…EDSLTLFGFA (63 aa). The tract at residues 64 to 138 is domain II; that stretch reads DADERDVFEL…DRLGPAQGAA (75 aa). The tract at residues 138-142 is flexible linker; it reads APAAP. Positions 143 to 200 are domain III; the sequence is VAVDDGADVVDALVGLGWPVRQAQDAVRGVLEDADGTAPDAAGLLRAALRSLAGDARG.

The protein belongs to the RuvA family. In terms of assembly, homotetramer. Forms an RuvA(8)-RuvB(12)-Holliday junction (HJ) complex. HJ DNA is sandwiched between 2 RuvA tetramers; dsDNA enters through RuvA and exits via RuvB. An RuvB hexamer assembles on each DNA strand where it exits the tetramer. Each RuvB hexamer is contacted by two RuvA subunits (via domain III) on 2 adjacent RuvB subunits; this complex drives branch migration. In the full resolvosome a probable DNA-RuvA(4)-RuvB(12)-RuvC(2) complex forms which resolves the HJ.

Its subcellular location is the cytoplasm. In terms of biological role, the RuvA-RuvB-RuvC complex processes Holliday junction (HJ) DNA during genetic recombination and DNA repair, while the RuvA-RuvB complex plays an important role in the rescue of blocked DNA replication forks via replication fork reversal (RFR). RuvA specifically binds to HJ cruciform DNA, conferring on it an open structure. The RuvB hexamer acts as an ATP-dependent pump, pulling dsDNA into and through the RuvAB complex. HJ branch migration allows RuvC to scan DNA until it finds its consensus sequence, where it cleaves and resolves the cruciform DNA. The chain is Holliday junction branch migration complex subunit RuvA from Beutenbergia cavernae (strain ATCC BAA-8 / DSM 12333 / CCUG 43141 / JCM 11478 / NBRC 16432 / NCIMB 13614 / HKI 0122).